The sequence spans 241 residues: Phosphatidylcholine synthase (241 aa).

Over 1 to 15 (MKIFNYKRVPYAEIR) the chain is Cytoplasmic. A helical membrane pass occupies residues 16–36 (AFSVHILTASGSFLAFLGVVA). Over 37–41 (ASEHR) the chain is Periplasmic. Residues 42–62 (FVDMFWWLGLALLVDGIDGPI) traverse the membrane as a helical segment. The Cytoplasmic portion of the chain corresponds to 63–76 (ARKVRVKEVLPNWS). A helical membrane pass occupies residues 77 to 97 (GDTLDNIIDYVTYVLLPAFAL). Topologically, residues 98 to 100 (YQS) are periplasmic. A helical membrane pass occupies residues 101 to 121 (GMIGEPLSFVAAGMIVVSSAI). Residues 122–133 (YYADMGMKTDEY) are Cytoplasmic-facing. The helical transmembrane segment at 134-154 (FFSGFPVVWNMVVFTLFVMDA) threads the bilayer. Over 155–159 (SATTA) the chain is Periplasmic. A helical transmembrane segment spans residues 160–180 (MTVVTVSVFLTFLPINFLHPV). The Cytoplasmic portion of the chain corresponds to 181 to 187 (RVKRLRP). A helical transmembrane segment spans residues 188–208 (LNLLVVAIWCALGGYALLMHF). The Periplasmic portion of the chain corresponds to 209–214 (ETPTWA). The chain crosses the membrane as a helical span at residues 215-235 (VIAFVASGIYLYCIGGILQFF). Residues 236-241 (PSLGAK) lie on the Cytoplasmic side of the membrane.

This sequence belongs to the CDP-alcohol phosphatidyltransferase class-I family. Mn(2+) serves as cofactor.

The protein localises to the cell inner membrane. The enzyme catalyses a CDP-1,2-diacyl-sn-glycerol + choline = a 1,2-diacyl-sn-glycero-3-phosphocholine + CMP + H(+). Condenses choline with CDP-diglyceride to produce phosphatidylcholine and CMP. Affects motility, biofilm formation and virulence of this bacterium when there is a complete loss of phosphatidylcholine formation due to absence of both the synthase (pcs) and the methylation (pmtA) pathways. This chain is Phosphatidylcholine synthase, found in Agrobacterium fabrum (strain C58 / ATCC 33970) (Agrobacterium tumefaciens (strain C58)).